The chain runs to 203 residues: Probable cytochrome c oxidase subunit 3 (203 aa).

The next 5 helical transmembrane spans lie at 30–50, 70–90, 102–122, 142–162, and 179–199; these read IVWLSSELMFFAGLFAMYFTA, AVPVTLVLIASSFTCQMGVFA, WYVITFLMGLFFVLGQGYEYY, LATGFHDLHVTGGLVAFIFLL, and IVVSYYWHFVDIVWIALFTVI.

It belongs to the cytochrome c oxidase subunit 3 family.

It localises to the cell membrane. It carries out the reaction 4 Fe(II)-[cytochrome c] + O2 + 8 H(+)(in) = 4 Fe(III)-[cytochrome c] + 2 H2O + 4 H(+)(out). This chain is Probable cytochrome c oxidase subunit 3 (ctaE), found in Mycolicibacterium paratuberculosis (strain ATCC BAA-968 / K-10) (Mycobacterium paratuberculosis).